The primary structure comprises 332 residues: L-lactate dehydrogenase A chain (332 aa).

NAD(+)-binding positions include 29–57 (GMVGMASAISILLKDLCDELALVDVMEDK) and Arg99. 3 residues coordinate substrate: Arg106, Asn138, and Arg169. Asn138 provides a ligand contact to NAD(+). His193 functions as the Proton acceptor in the catalytic mechanism. Position 248 (Thr248) interacts with substrate.

This sequence belongs to the LDH/MDH superfamily. LDH family. In terms of assembly, homotetramer.

Its subcellular location is the cytoplasm. The catalysed reaction is (S)-lactate + NAD(+) = pyruvate + NADH + H(+). It participates in fermentation; pyruvate fermentation to lactate; (S)-lactate from pyruvate: step 1/1. Interconverts simultaneously and stereospecifically pyruvate and lactate with concomitant interconversion of NADH and NAD(+). In Gillichthys seta (Shortjaw mudsucker), this protein is L-lactate dehydrogenase A chain (ldha).